Here is a 90-residue protein sequence, read N- to C-terminus: MANHSSAKKAARQTVKRTLINKKRSSAIKTFIKKVVNEISLGNKENANLALSVAQSKIMQGVKKNIIKLNTASRKISRLSRQIQSMDKSK.

The protein belongs to the bacterial ribosomal protein bS20 family.

Its function is as follows. Binds directly to 16S ribosomal RNA. The protein is Small ribosomal subunit protein bS20 of Rickettsia canadensis (strain McKiel).